An 869-amino-acid polypeptide reads, in one-letter code: Rho GTPase-activating protein 27 (869 aa).

Positions 6–69 (EGDVYVLVEH…PAQYVRELPA (64 aa)) constitute an SH3 domain. A disordered region spans residues 104–137 (GADGSSAEPRGRASSLCGPARQRTSGQRNSLAPG). Phosphoserine occurs at positions 155, 215, and 249. 2 consecutive WW domains span residues 246–280 (PRLS…SPFE) and 299–333 (ESLE…DETE). 3 disordered regions span residues 275–299 (WESP…GSGE), 331–389 (ETEE…DLGP), and 447–474 (VPVP…PEEK). The segment covering 331–343 (ETEELEDDPEEQL) has biased composition (acidic residues). Polar residues predominate over residues 345 to 356 (MQPSLSPRSPGQ). Position 350 is a phosphoserine (serine 350). Positions 414 to 447 (QFTQEQWVRLEDQEGKPYFYNPEDSSVQWELPQV) constitute a WW 3 domain. 2 positions are modified to phosphoserine: serine 459 and serine 462. Threonine 464 carries the phosphothreonine modification. Serine 469 carries the phosphoserine modification. Residues 477–593 (TLDKAGVLHR…WHKAIAEGIE (117 aa)) enclose the PH domain. The disordered stretch occupies residues 598–644 (DLPQREEGEPSSADFGSSERLGSWKEEDVRPNAASPSLNPGSQESDL). Residues 631–642 (ASPSLNPGSQES) are compositionally biased toward polar residues. A Phosphoserine modification is found at serine 632. Residues 677–866 (CALAQLCERE…LILHQCADIF (190 aa)) form the Rho-GAP domain.

In terms of assembly, interacts with SH3KBP1/CIN85.

The protein resides in the cytoplasm. It is found in the membrane. In terms of biological role, rho GTPase-activating protein which may be involved in clathrin-mediated endocytosis. GTPase activators for the Rho-type GTPases act by converting them to an inactive GDP-bound state. Has activity toward CDC42 and RAC1. This is Rho GTPase-activating protein 27 (Arhgap27) from Rattus norvegicus (Rat).